The following is a 427-amino-acid chain: Glutamate-1-semialdehyde 2,1-aminomutase (427 aa).

The residue at position 265 (K265) is an N6-(pyridoxal phosphate)lysine.

Belongs to the class-III pyridoxal-phosphate-dependent aminotransferase family. HemL subfamily. Homodimer. Pyridoxal 5'-phosphate serves as cofactor.

It localises to the cytoplasm. The enzyme catalyses (S)-4-amino-5-oxopentanoate = 5-aminolevulinate. Its pathway is porphyrin-containing compound metabolism; protoporphyrin-IX biosynthesis; 5-aminolevulinate from L-glutamyl-tRNA(Glu): step 2/2. The chain is Glutamate-1-semialdehyde 2,1-aminomutase from Burkholderia pseudomallei (strain 1710b).